The following is a 102-amino-acid chain: Parathymosin (102 aa).

Residues 1–102 (MSEKSVEAAA…RQKTENGASA (102 aa)) form a disordered region. Residue Ser2 is modified to N-acetylserine. At Ser2 the chain carries Phosphoserine. An N6-acetyllysine modification is found at Lys4. A phosphoserine mark is found at Ser5 and Ser13. Over residues 13-37 (SAKDLKEKKEKVEEKASRKERKKEV) the composition is skewed to basic and acidic residues. Residue Lys15 is modified to N6-acetyllysine. Over residues 38–76 (VEEEENGAEEEEEETAEDGEEEDEGEEEDEEEEEEDDEG) the composition is skewed to acidic residues. Thr52 bears the Phosphothreonine mark. The residue at position 92 (Lys92) is an N6-acetyllysine.

This sequence belongs to the pro/parathymosin family.

Its function is as follows. Parathymosin may mediate immune function by blocking the effect of prothymosin alpha which confers resistance to certain opportunistic infections. This is Parathymosin (PTMS) from Homo sapiens (Human).